A 38-amino-acid chain; its full sequence is Trypsin inhibitor DE5 beta chain (38 aa).

It belongs to the protease inhibitor I3 (leguminous Kunitz-type inhibitor) family. Heterodimer of an alpha and a beta chain linked by a disulfide bond.

Functionally, inhibition of trypsin. The sequence is that of Trypsin inhibitor DE5 beta chain from Adenanthera pavonina (Sandal bead tree).